We begin with the raw amino-acid sequence, 91 residues long: Small ribosomal subunit protein uS19 (91 aa).

This sequence belongs to the universal ribosomal protein uS19 family.

Protein S19 forms a complex with S13 that binds strongly to the 16S ribosomal RNA. In Shouchella clausii (strain KSM-K16) (Alkalihalobacillus clausii), this protein is Small ribosomal subunit protein uS19.